The sequence spans 336 residues: Adenylate isopentenyltransferase 3, chloroplastic (336 aa).

The N-terminal 55 residues, 1-55, are a transit peptide targeting the chloroplast; that stretch reads MIMKISMAMCKQPLPPSPTLDFPPARFGPNMLTLNPYGPKDKVVVIMGATGTGKS. 48–55 contacts ATP; that stretch reads GATGTGKS. Position 333 is a cysteine methyl ester (C333). The S-farnesyl cysteine moiety is linked to residue C333. The propeptide at 334–336 is removed in mature form; the sequence is LVA.

It belongs to the IPP transferase family. In terms of processing, farnesylated. In terms of tissue distribution, expressed the phloem companion cells.

The protein resides in the plastid. It is found in the chloroplast. Its subcellular location is the nucleus membrane. It localises to the cytoplasm. It catalyses the reaction dimethylallyl diphosphate + ADP = N(6)-(dimethylallyl)adenosine 5'-diphosphate + diphosphate. The enzyme catalyses dimethylallyl diphosphate + ATP = N(6)-(dimethylallyl)adenosine 5'-triphosphate + diphosphate. Involved in cytokinin biosynthesis. Catalyzes the transfer of an isopentenyl group from dimethylallyl diphosphate (DMAPP) to ATP and ADP. The sequence is that of Adenylate isopentenyltransferase 3, chloroplastic (IPT3) from Arabidopsis thaliana (Mouse-ear cress).